The primary structure comprises 173 residues: Co-chaperone protein HscB (173 aa).

The J domain occupies 2–74; the sequence is DYFTLFGLPA…LKRAEYMLSQ (73 aa).

The protein belongs to the HscB family. Interacts with HscA and stimulates its ATPase activity. Interacts with IscU.

Co-chaperone involved in the maturation of iron-sulfur cluster-containing proteins. Seems to help targeting proteins to be folded toward HscA. This chain is Co-chaperone protein HscB, found in Xenorhabdus nematophila (strain ATCC 19061 / DSM 3370 / CCUG 14189 / LMG 1036 / NCIMB 9965 / AN6).